The sequence spans 1044 residues: Translation initiation factor IF-2 (1044 aa).

The disordered stretch occupies residues 31-425; the sequence is VRSASSTVEP…RKSKRAKRQE (395 aa). Pro residues-rich tracts occupy residues 77–98 and 106–116; these read GPAPAARPQAPAPAQPAPPQPA and APAPAPAPRPA. Residues 117–148 show a composition bias toward low complexity; that stretch reads EPAANPAPAAPPAFQAPAPAPAERPAAAQRPA. A compositionally biased stretch (gly residues) spans 168–185; that stretch reads GGPGQGPRPGARPGGPGA. Residues 204 to 247 show a composition bias toward basic and acidic residues; the sequence is GPGDRPERSERPDRGDRPQGDRPRSDRPQGERQQGDRPQGDRPG. The segment covering 285-304 has biased composition (low complexity); sequence GGAPRPGNNPFASNQGMPRP. Pro residues predominate over residues 305-328; the sequence is QGGPRPTPAGPGGPRPGGPRPNPG. Positions 329–338 are enriched in low complexity; that stretch reads MMPARPTVGR. The segment covering 339 to 409 has biased composition (gly residues); it reads PGAGPGAGRP…GTQGAFGRAG (71 aa). A compositionally biased stretch (basic residues) spans 413–422; sequence VRGRKSKRAK. In terms of domain architecture, tr-type G spans 537 to 709; it reads ARPPVVTVMG…VLLTADASLD (173 aa). The interval 546–553 is G1; sequence GHVDHGKT. Residue 546 to 553 coordinates GTP; the sequence is GHVDHGKT. A G2 region spans residues 571-575; it reads GITQH. A G3 region spans residues 596 to 599; the sequence is DTPG. Residues 596-600 and 650-653 contribute to the GTP site; these read DTPGH and NKVD. Residues 650 to 653 are G4; that stretch reads NKVD. The tract at residues 686 to 688 is G5; that stretch reads SAR.

It belongs to the TRAFAC class translation factor GTPase superfamily. Classic translation factor GTPase family. IF-2 subfamily.

It is found in the cytoplasm. Its function is as follows. One of the essential components for the initiation of protein synthesis. Protects formylmethionyl-tRNA from spontaneous hydrolysis and promotes its binding to the 30S ribosomal subunits. Also involved in the hydrolysis of GTP during the formation of the 70S ribosomal complex. This is Translation initiation factor IF-2 from Kineococcus radiotolerans (strain ATCC BAA-149 / DSM 14245 / SRS30216).